A 488-amino-acid polypeptide reads, in one-letter code: MAAAATATAGTKGVIRQVIGPVLDVEFPAGKLPKILNALRIEGKNPSGQDVAITAEVQQLLGDHRVRAVSMSSTDGLVRGMEALDTGAAISVPVGEATLGRIFNVLGEPVDEQGPVTTDATAPIHRPSPKLTELETKPTVFETGIKVIDLLAPYRQGGKVGLFGGAGVGKTVLIQELINNIAKEHGGVSVFGGVGERTREGNDLYEEFKESGVINSDDLSKSKVALCFGQMNEPPGARMRVGLSALTMAEHFRDVNKQDVLLFIDNIFRFVQAGSEVSALLGRMPSAVGYQPTLGTDVGALQERITSTLEGSITSIQAVYVPADDLTDPAPATTFAHLDATTVLARALAAKGIYPAVDPLDSTSTMLQPSVVGDEHYRTARSVQATLQRYKELQDIIAILGLDELSEDDRRTVDRARKIEKFLSQPFFVAEIFTGMSGKYVKLEETIAGFNMIMSGELDHLPEQAFYLVGNIDEVKAKAEKMASEAKG.

164 to 171 (GGAGVGKT) is a binding site for ATP.

The protein belongs to the ATPase alpha/beta chains family. F-type ATPases have 2 components, CF(1) - the catalytic core - and CF(0) - the membrane proton channel. CF(1) has five subunits: alpha(3), beta(3), gamma(1), delta(1), epsilon(1). CF(0) has four main subunits: a(1), b(1), b'(1) and c(9-12).

Its subcellular location is the cellular thylakoid membrane. It catalyses the reaction ATP + H2O + 4 H(+)(in) = ADP + phosphate + 5 H(+)(out). Its function is as follows. Produces ATP from ADP in the presence of a proton gradient across the membrane. The catalytic sites are hosted primarily by the beta subunits. This Prochlorococcus marinus (strain MIT 9313) protein is ATP synthase subunit beta.